We begin with the raw amino-acid sequence, 146 residues long: Hut operon positive regulatory protein (146 aa).

It belongs to the HutP family. In terms of assembly, homohexamer.

Its function is as follows. Antiterminator that binds to cis-acting regulatory sequences on the mRNA in the presence of histidine, thereby suppressing transcription termination and activating the hut operon for histidine utilization. This is Hut operon positive regulatory protein from Bacillus cereus (strain ZK / E33L).